The sequence spans 186 residues: Methylamine dehydrogenase light chain (186 aa).

A signal peptide (tat-type signal) is located at residues 1 to 57 (MKKNTGFDSGIEKLARKTASKTGRRSFIGKLGGFLVGSALLPLLPVDRRGRMNEAHA). 6 disulfide bridges follow: cysteine 78–cysteine 143, cysteine 84–cysteine 116, cysteine 91–cysteine 176, cysteine 93–cysteine 141, cysteine 101–cysteine 132, and cysteine 133–cysteine 164. At tryptophan 112 the chain carries Tryptophylquinone. The segment at residues 112–163 (WVASCFNPGDGQTYLIAYRDCCGKQTCGRCNCVNVQGELPVYRPEFNNDIVW) is a cross-link (tryptophan tryptophylquinone (Trp-Trp)).

Belongs to the aromatic amine dehydrogenase light chain family. Heterotetramer of two light and two heavy chains. It depends on tryptophan tryptophylquinone residue as a cofactor. Predicted to be exported by the Tat system. The position of the signal peptide cleavage has not been experimentally proven. In terms of processing, tryptophan tryptophylquinone (TTQ) is formed by oxidation of the indole ring of a tryptophan to form tryptophylquinone followed by covalent cross-linking with another tryptophan residue.

Its subcellular location is the periplasm. It carries out the reaction 2 oxidized [amicyanin] + methylamine + H2O = 2 reduced [amicyanin] + formaldehyde + NH4(+) + 2 H(+). It participates in one-carbon metabolism; methylamine degradation; formaldehyde from methylamine: step 1/1. Methylamine dehydrogenase carries out the oxidation of methylamine. Electrons are passed from methylamine dehydrogenase to amicyanin. The sequence is that of Methylamine dehydrogenase light chain (mauA) from Methylobacillus flagellatus (strain ATCC 51484 / DSM 6875 / VKM B-1610 / KT).